Reading from the N-terminus, the 704-residue chain is Pentatricopeptide repeat-containing protein At1g56690, mitochondrial (704 aa).

The N-terminal 12 residues, 1–12 (MKRLKLILRRTY), are a transit peptide targeting the mitochondrion. PPR repeat units follow at residues 16 to 46 (TGVNCSFEISRLSRIGKINEARKFFDSLQFK), 47 to 81 (AIGSWNSIVSGYFSNGLPKEARQLFDEMSERNVVS), 82 to 108 (WNGLVSGYIKNRMIVEARNVFELMPER), 109 to 143 (NVVSWTAMVKGYMQEGMVGEAESLFWRMPERNEVS), 144 to 170 (WTVMFGGLIDDGRIDKARKLYDMMPVK), 171 to 205 (DVVASTNMIGGLCREGRVDEARLIFDEMRERNVVT), 206 to 232 (WTTMITGYRQNNRVDVARKLFEVMPEK), 233 to 267 (TEVSWTSMLLGYTLSGRIEDAEEFFEVMPMKPVIA), 268 to 294 (CNAMIVGFGEVGEISKARRVFDLMEDR), 295 to 329 (DNATWRGMIKAYERKGFELEALDLFAQMQKQGVRP), 330 to 364 (SFPSLISILSVCATLASLQYGRQVHAHLVRCQFDD), 365 to 395 (DVYVASVLMTMYVKCGELVKAKLVFDRFSSK), 396 to 430 (DIIMWNSIISGYASHGLGEEALKIFHEMPSSGTMP), 431 to 465 (NKVTLIAILTACSYAGKLEEGLEIFESMESKFCVT), and 467 to 497 (TVEHYSCTVDMLGRAGQVDKAMELIESMTIK). The type E motif stretch occupies residues 502 to 577 (VWGALLGACK…FPGCSWIEVG (76 aa)). The interval 578–609 (KKVHMFTRGGIKNHPEQAMILMMLEKTDGLLR) is type E(+) motif. The type DYW motif stretch occupies residues 610 to 704 (EAGYSPDCSH…NGECSCRDYW (95 aa)).

The protein belongs to the PPR family. PCMP-H subfamily.

It localises to the mitochondrion. The sequence is that of Pentatricopeptide repeat-containing protein At1g56690, mitochondrial (PCMP-H69) from Arabidopsis thaliana (Mouse-ear cress).